The following is an 833-amino-acid chain: V-type proton ATPase 116 kDa subunit a 4 (833 aa).

The Cytoplasmic segment spans residues 1-390; sequence MASVFRSEEM…DAYGVGSYRE (390 aa). A helical transmembrane segment spans residues 391–409; it reads INPAPYTIITFPFLFAVMF. At 410-411 the chain is on the vacuolar side; it reads GD. Residues 412-428 traverse the membrane as a helical segment; sequence CGHGMVMLMAALWMVLN. At 429–443 the chain is on the cytoplasmic side; the sequence is ERHLLAQKSTNEMWN. Residues 444–473 form a helical membrane-spanning segment; the sequence is IFFNGRYLILLMGIFSIYTGLIYNDCFSKS. Topologically, residues 474–538 are vacuolar; it reads FNIFGSSWSV…ASNKLTFLNS (65 aa). A helical membrane pass occupies residues 539–558; sequence YKMKMSVILGIAHMIFGVIL. Topologically, residues 559–576 are cytoplasmic; the sequence is SLFNHIYFRRTLNIILQF. Residues 577 to 597 form a helical membrane-spanning segment; it reads IPEMIFMLSLFGYLVFMIIFK. The Vacuolar portion of the chain corresponds to 598–642; that stretch reads WCRYDAHTSRKAPSILIHFIGMFLFDYDDSSNAPLYGHQQEVQTF. Residues 643–662 form a helical membrane-spanning segment; sequence FVIIALVSVPWMLLIKPFVL. Residues 663–720 lie on the Cytoplasmic side of the membrane; the sequence is RAKHQKSQLQSFTIHEDAVEGDHSGHSSKKTAGAHGMKDGHEEEFNFGDIFVHQAIHT. The tract at residues 681–700 is disordered; it reads VEGDHSGHSSKKTAGAHGMK. The helical transmembrane segment at 721–745 threads the bilayer; sequence IEYCLGCISNTASYLRLWALSLAHA. The Vacuolar portion of the chain corresponds to 746–766; that stretch reads ELSEVLWTMVMSIGLRLQGWA. The chain crosses the membrane as a helical span at residues 767–805; the sequence is GLVGVFIIFAVFAVLTVAILLVMEGLSAFLHALRLHWVE. At 806–833 the chain is on the cytoplasmic side; that stretch reads FQNKFYEGAGSKFSPFSFKHVLEGTAEE.

Belongs to the V-ATPase 116 kDa subunit family. V-ATPase is a heteromultimeric enzyme made up of two complexes: the ATP-hydrolytic V1 complex and the proton translocation V0 complex. The V1 complex consists of three catalytic AB heterodimers that form a heterohexamer, three peripheral stalks each consisting of EG heterodimers, one central rotor including subunits D and F, and the regulatory subunits C and H. The proton translocation complex V0 consists of the proton transport subunit a, a ring of proteolipid subunits c9c'', rotary subunit d, subunits e and f, and the accessory subunits ATP6AP1/Ac45 and ATP6AP2/PRR. Interacts with the V1 complex V-ATPase subunit A ATP6V1A. Interacts with the V0 complex V-ATPase subunit c ATP6V0C. As to expression, specifically expressed in kidney, but not in the heart, brain, spleen, lung, liver, muscle, or testis. Distribution within the kidney appears more widespread than that seen in man. High intensity staining at the surface of intercalated cells, with additional expression in the proximal tubule.

It localises to the apical cell membrane. Its subcellular location is the basolateral cell membrane. In terms of biological role, subunit of the V0 complex of vacuolar(H+)-ATPase (V-ATPase), a multisubunit enzyme composed of a peripheral complex (V1) that hydrolyzes ATP and a membrane integral complex (V0) that translocates protons. V-ATPase is responsible for acidifying and maintaining the pH of intracellular compartments and in some cell types, is targeted to the plasma membrane, where it is responsible for acidifying the extracellular environment. Involved in normal vectorial acid transport into the urine by the kidney. The protein is V-type proton ATPase 116 kDa subunit a 4 (Atp6v0a4) of Mus musculus (Mouse).